The chain runs to 180 residues: Mitochondrial inner membrane protease subunit 2 (180 aa).

Residues 19-39 form a helical membrane-spanning segment; it reads LVGITLWVPVLMFVEQHVVSV. Residues S46 and K92 contribute to the active site.

Belongs to the peptidase S26 family. IMP2 subfamily. As to quaternary structure, heterodimer of 2 subunits, imp1 and imp2.

It localises to the mitochondrion inner membrane. Catalyzes the removal of transit peptides required for the targeting of proteins from the mitochondrial matrix, across the inner membrane, into the inter-membrane space. The polypeptide is Mitochondrial inner membrane protease subunit 2 (Schizosaccharomyces pombe (strain 972 / ATCC 24843) (Fission yeast)).